We begin with the raw amino-acid sequence, 530 residues long: MEEDSLYLGGEWQFNHFSKLTSSRPDAAFAEIQRTSLPEKSPLSCETRVDLCDDLAPVARQLAPREKLPLSNRRPAAVGAGLQNMGNTCYVNASLQCLTYTPPLANYMLSREHSQTCHRHKGCMLCTMQAHITRALHNPGHVIQPSQALAAGFHRGKQEDAHEFLMFTVDAMKKACLPGHKQVDHHSKDTTLIHQIFGGYWRSQIKCLHCHGISDTFDPYLDIALDIQAAQSVQQALEQLVKPEELNGENAYHCGVCLQRAPASKMLTLLTSAKVLILVLKRFSDVTGNKIAKNVQYPECLDMQPYMSQPNTGPLVYVLYAVLVHAGWSCHNGHYFSYVKAQEGQWYKMDDAEVTASSITSVLSQQAYVLFYIQKSEWERHSESVSRGREPRALGAEDTDRRATQGELKRDHPCLQAPELDEHLVERATQESTLDHWKFLQEQNKTKPEFNVRKVEGTLPPDVLVIHQSKYKCGMKNHHPEQQSSLLKLSSTTPTHQESMNTGTLASLRGRARRSKGKNKHSKRALLVCQ.

Residues 80–375 enclose the USP domain; it reads AGLQNMGNTC…QAYVLFYIQK (296 aa). C89 acts as the Nucleophile in catalysis. H334 serves as the catalytic Proton acceptor. Basic and acidic residues-rich tracts occupy residues 382–392 and 398–412; these read SESVSRGREPR and DTDR…KRDH. 2 disordered regions span residues 382–412 and 477–530; these read SESV…KRDH and NHHP…LVCQ. Positions 484–495 are enriched in low complexity; that stretch reads SSLLKLSSTTPT. Residues 496–505 show a composition bias toward polar residues; that stretch reads HQESMNTGTL. The segment covering 510-524 has biased composition (basic residues); the sequence is GRARRSKGKNKHSKR.

This sequence belongs to the peptidase C19 family. USP17 subfamily.

Its subcellular location is the nucleus. It is found in the endoplasmic reticulum. The enzyme catalyses Thiol-dependent hydrolysis of ester, thioester, amide, peptide and isopeptide bonds formed by the C-terminal Gly of ubiquitin (a 76-residue protein attached to proteins as an intracellular targeting signal).. Functionally, deubiquitinating enzyme that removes conjugated ubiquitin from specific proteins to regulate different cellular processes that may include cell proliferation, progression through the cell cycle, apoptosis, cell migration, and the cellular response to viral infection. This chain is Ubiquitin carboxyl-terminal hydrolase 17-like protein 12 (USP17L12), found in Homo sapiens (Human).